Reading from the N-terminus, the 276-residue chain is Formamidopyrimidine-DNA glycosylase (276 aa).

Catalysis depends on Pro-2, which acts as the Schiff-base intermediate with DNA. The Proton donor role is filled by Glu-3. Residue Lys-58 is the Proton donor; for beta-elimination activity of the active site. Positions 92, 111, and 154 each coordinate DNA. The FPG-type zinc finger occupies 239-273 (QVYGHVGEECPRCGNIFEKIKVSGRGTTFCPHCQV). The active-site Proton donor; for delta-elimination activity is Arg-263.

Belongs to the FPG family. As to quaternary structure, monomer. Zn(2+) is required as a cofactor.

It carries out the reaction Hydrolysis of DNA containing ring-opened 7-methylguanine residues, releasing 2,6-diamino-4-hydroxy-5-(N-methyl)formamidopyrimidine.. It catalyses the reaction 2'-deoxyribonucleotide-(2'-deoxyribose 5'-phosphate)-2'-deoxyribonucleotide-DNA = a 3'-end 2'-deoxyribonucleotide-(2,3-dehydro-2,3-deoxyribose 5'-phosphate)-DNA + a 5'-end 5'-phospho-2'-deoxyribonucleoside-DNA + H(+). Involved in base excision repair of DNA damaged by oxidation or by mutagenic agents. Acts as a DNA glycosylase that recognizes and removes damaged bases. Has a preference for oxidized purines, such as 7,8-dihydro-8-oxoguanine (8-oxoG). Has AP (apurinic/apyrimidinic) lyase activity and introduces nicks in the DNA strand. Cleaves the DNA backbone by beta-delta elimination to generate a single-strand break at the site of the removed base with both 3'- and 5'-phosphates. The protein is Formamidopyrimidine-DNA glycosylase of Lactobacillus acidophilus (strain ATCC 700396 / NCK56 / N2 / NCFM).